The sequence spans 153 residues: 6,7-dimethyl-8-ribityllumazine synthase (153 aa).

Residues F22, 56 to 58 (AFE), and 80 to 82 (AVI) each bind 5-amino-6-(D-ribitylamino)uracil. (2S)-2-hydroxy-3-oxobutyl phosphate is bound at residue 85 to 86 (ST). Residue H88 is the Proton donor of the active site. F113 serves as a coordination point for 5-amino-6-(D-ribitylamino)uracil. Residue R127 participates in (2S)-2-hydroxy-3-oxobutyl phosphate binding.

Belongs to the DMRL synthase family.

It catalyses the reaction (2S)-2-hydroxy-3-oxobutyl phosphate + 5-amino-6-(D-ribitylamino)uracil = 6,7-dimethyl-8-(1-D-ribityl)lumazine + phosphate + 2 H2O + H(+). The protein operates within cofactor biosynthesis; riboflavin biosynthesis; riboflavin from 2-hydroxy-3-oxobutyl phosphate and 5-amino-6-(D-ribitylamino)uracil: step 1/2. Its function is as follows. Catalyzes the formation of 6,7-dimethyl-8-ribityllumazine by condensation of 5-amino-6-(D-ribitylamino)uracil with 3,4-dihydroxy-2-butanone 4-phosphate. This is the penultimate step in the biosynthesis of riboflavin. This chain is 6,7-dimethyl-8-ribityllumazine synthase, found in Fusobacterium nucleatum subsp. nucleatum (strain ATCC 25586 / DSM 15643 / BCRC 10681 / CIP 101130 / JCM 8532 / KCTC 2640 / LMG 13131 / VPI 4355).